The primary structure comprises 792 residues: Phenylalanine--tRNA ligase beta subunit (792 aa).

The 109-residue stretch at 39-147 folds into the tRNA-binding domain; sequence GESLGQVVVA…DDAPVGQALA (109 aa). Residues 400-475 enclose the B5 domain; that stretch reads PQPARILLRR…RIHGYDRVPT (76 aa). Positions 453, 459, 462, and 463 each coordinate Mg(2+). Residues 698-791 enclose the FDX-ACB domain; it reads SRFPSVRRDL…IEREHRARIR (94 aa).

This sequence belongs to the phenylalanyl-tRNA synthetase beta subunit family. Type 1 subfamily. In terms of assembly, tetramer of two alpha and two beta subunits. Mg(2+) serves as cofactor.

The protein localises to the cytoplasm. It carries out the reaction tRNA(Phe) + L-phenylalanine + ATP = L-phenylalanyl-tRNA(Phe) + AMP + diphosphate + H(+). In Xanthomonas oryzae pv. oryzae (strain MAFF 311018), this protein is Phenylalanine--tRNA ligase beta subunit.